The chain runs to 434 residues: UDP-N-acetylmuramate--L-alanine ligase (434 aa).

An ATP-binding site is contributed by 108–114 (GSHGKTT).

This sequence belongs to the MurCDEF family.

It localises to the cytoplasm. The catalysed reaction is UDP-N-acetyl-alpha-D-muramate + L-alanine + ATP = UDP-N-acetyl-alpha-D-muramoyl-L-alanine + ADP + phosphate + H(+). Its pathway is cell wall biogenesis; peptidoglycan biosynthesis. Cell wall formation. In Geobacillus kaustophilus (strain HTA426), this protein is UDP-N-acetylmuramate--L-alanine ligase.